The chain runs to 208 residues: Glycerol-3-phosphate acyltransferase (208 aa).

The next 6 helical transmembrane spans lie at 7–27, 63–83, 86–106, 123–143, 149–169, and 170–190; these read PNIH…GYLL, MMAA…ILVA, AGMS…GHCF, GVMA…WLVV, ISSL…FLIH, and PEIP…VIFY.

The protein belongs to the PlsY family. In terms of assembly, probably interacts with PlsX.

It localises to the cell inner membrane. It catalyses the reaction an acyl phosphate + sn-glycerol 3-phosphate = a 1-acyl-sn-glycero-3-phosphate + phosphate. It functions in the pathway lipid metabolism; phospholipid metabolism. In terms of biological role, catalyzes the transfer of an acyl group from acyl-phosphate (acyl-PO(4)) to glycerol-3-phosphate (G3P) to form lysophosphatidic acid (LPA). This enzyme utilizes acyl-phosphate as fatty acyl donor, but not acyl-CoA or acyl-ACP. The chain is Glycerol-3-phosphate acyltransferase from Wolinella succinogenes (strain ATCC 29543 / DSM 1740 / CCUG 13145 / JCM 31913 / LMG 7466 / NCTC 11488 / FDC 602W) (Vibrio succinogenes).